Consider the following 287-residue polypeptide: UPF0761 membrane protein MS0032 (287 aa).

6 consecutive transmembrane segments (helical) span residues 37-57 (MLAIVPLVMVVFAIFSAFPMF), 93-113 (SMSAVGIISLIAVALLLINQI), 128-148 (FIFSMTIYWTLLTLGPIFIGM), 174-194 (LLSFVPFLLTWLSFSLIYTLV), 204-224 (AAVGALVAAIFFTLGKKAFAW), and 238-258 (AMATLPITLLWIQLSWLFILL).

It belongs to the UPF0761 family.

It localises to the cell inner membrane. This is UPF0761 membrane protein MS0032 from Mannheimia succiniciproducens (strain KCTC 0769BP / MBEL55E).